The sequence spans 322 residues: MADVLTELPGVGPSTAEKLIEAGYLDFMKIATSTIGELTDIEGISEKAAAKMIMAARDLCDLGFKSGVELLRQRQSVWRLSTGSKELDTVLAGGLESQSVTEFAGMYGSGKTQIMHQSCVNLQIAGKIYADLEGVVEEELENPKAVYIDTEGTFRPERVVQMAEGLGIDGQLVLDNTFVARAYNSDMQMLFAEKIEDLIKSGNNIKLVIIDSLTSTFRNEFTGRGKLAERQQKLGRHMATLNKLADLYNCIVLVTNQVAAKPDAFFGVAEQAIGGHVVGHAATFRFFLRKSKGDKRVAKLYDSPHLPDSEAVFRITEKGIMD.

G105–T112 is a binding site for ATP.

It belongs to the eukaryotic RecA-like protein family.

Functionally, involved in DNA repair and in homologous recombination. Binds and assemble on single-stranded DNA to form a nucleoprotein filament. Hydrolyzes ATP in a ssDNA-dependent manner and promotes DNA strand exchange between homologous DNA molecules. This Methanococcus maripaludis (strain C6 / ATCC BAA-1332) protein is DNA repair and recombination protein RadA.